The chain runs to 135 residues: Basic phospholipase A2 10 (135 aa).

Cystine bridges form between cysteine 28/cysteine 87, cysteine 42/cysteine 134, cysteine 44/cysteine 60, cysteine 59/cysteine 115, cysteine 66/cysteine 108, cysteine 76/cysteine 101, and cysteine 94/cysteine 106. Residues tyrosine 43, glycine 45, and glycine 47 each coordinate Ca(2+). The active site involves histidine 63. Aspartate 64 contacts Ca(2+). Residue aspartate 109 is part of the active site.

It belongs to the phospholipase A2 family. Group I subfamily. D49 sub-subfamily. The cofactor is Ca(2+). Expressed by the venom gland.

The protein localises to the secreted. It catalyses the reaction a 1,2-diacyl-sn-glycero-3-phosphocholine + H2O = a 1-acyl-sn-glycero-3-phosphocholine + a fatty acid + H(+). Its function is as follows. Snake venom phospholipase A2 (PLA2) that inhibits neuromuscular transmission by blocking acetylcholine release from the nerve termini. PLA2 catalyzes the calcium-dependent hydrolysis of the 2-acyl groups in 3-sn-phosphoglycerides. The protein is Basic phospholipase A2 10 of Bungarus fasciatus (Banded krait).